The chain runs to 156 residues: Small ribosomal subunit protein uS7 (156 aa).

The protein belongs to the universal ribosomal protein uS7 family. In terms of assembly, part of the 30S ribosomal subunit. Contacts proteins S9 and S11.

One of the primary rRNA binding proteins, it binds directly to 16S rRNA where it nucleates assembly of the head domain of the 30S subunit. Is located at the subunit interface close to the decoding center, probably blocks exit of the E-site tRNA. The polypeptide is Small ribosomal subunit protein uS7 (Aster yellows witches'-broom phytoplasma (strain AYWB)).